The sequence spans 110 residues: MSLTEARFHDLVDATQQTLEDIFDESDLDIDLESSAGVLTVKFDNGSQVIFSRQEPLRQLWLAARSGGFHFDYDEESERWMCDKSEEQLGEMLERIVLEQADIKLEFEGL.

It belongs to the frataxin family.

Involved in iron-sulfur (Fe-S) cluster assembly. May act as a regulator of Fe-S biogenesis. The protein is Iron-sulfur cluster assembly protein CyaY of Pseudomonas fluorescens (strain ATCC BAA-477 / NRRL B-23932 / Pf-5).